The sequence spans 239 residues: Probable transcriptional regulatory protein CD630_07950 (239 aa).

This sequence belongs to the TACO1 family.

Its subcellular location is the cytoplasm. The protein is Probable transcriptional regulatory protein CD630_07950 of Clostridioides difficile (strain 630) (Peptoclostridium difficile).